Here is a 493-residue protein sequence, read N- to C-terminus: MFKFALTLTLCLAGSLSLAQHNPHWWGNRNTIVHLFEWKWSDIAQECESFLGPRGFAGVQVSPVNENIISAGRPWWERYQPISYKLTTRSGNEEEFGDMVRRCNDVGVRIYVDVLLNHMSGDFDGVAVGTAGTEAEPRKKSFPGVPYTAQDFHPTCEITDWNDRFQVQQCELVGLKDLDQSSDWVRSKLIEFLDHLIELGVAGFRVDAAKHMASEDLEYIYSSLSNLNIDHGFPHNSRPFIFQEVIDHGHETVSRDEYKDLGAVTEFRFSEEIGNAFRGNNALKWLQSWGTGWGFLPSGQALTFVDNHDNQRDAGAVLSYKSPRQYKMATAFHLAYPYGISRVMSSFAFDDHDTPPPQDAQERIISPEFDEDGACVNGWICEHRWRQIYAMVGFKNAVRDTEITGWWDNGDNQIAFCRGNKGFLAINNNLYDLSQDLNTCLPAGTYCDVISGSLIDGSCTGKSVTVNENGFGYIHIGSDDFDGVLALHVDAKV.

The N-terminal stretch at 1–19 (MFKFALTLTLCLAGSLSLA) is a signal peptide. Residue glutamine 20 is modified to Pyrrolidone carboxylic acid. Cysteine 47 and cysteine 103 form a disulfide bridge. Residues asparagine 117, glutamine 168, and aspartate 177 each contribute to the Ca(2+) site. A disulfide bond links cysteine 156 and cysteine 170. Position 205 (arginine 205) interacts with chloride. The active-site Nucleophile is the aspartate 207. Histidine 211 is a binding site for Ca(2+). Catalysis depends on glutamate 244, which acts as the Proton donor. Asparagine 307 and arginine 342 together coordinate chloride. 3 disulfide bridges follow: cysteine 375-cysteine 381, cysteine 417-cysteine 440, and cysteine 447-cysteine 459.

The protein belongs to the glycosyl hydrolase 13 family. In terms of assembly, monomer. Ca(2+) is required as a cofactor. Requires chloride as cofactor.

It localises to the secreted. The enzyme catalyses Endohydrolysis of (1-&gt;4)-alpha-D-glucosidic linkages in polysaccharides containing three or more (1-&gt;4)-alpha-linked D-glucose units.. The sequence is that of Alpha-amylase-related protein (Amyrel) from Drosophila sechellia (Fruit fly).